Here is a 155-residue protein sequence, read N- to C-terminus: Protein Smg homolog (155 aa).

It belongs to the Smg family.

The protein is Protein Smg homolog of Methylococcus capsulatus (strain ATCC 33009 / NCIMB 11132 / Bath).